The primary structure comprises 428 residues: Histidine--tRNA ligase (428 aa).

Belongs to the class-II aminoacyl-tRNA synthetase family. In terms of assembly, homodimer.

It localises to the cytoplasm. It carries out the reaction tRNA(His) + L-histidine + ATP = L-histidyl-tRNA(His) + AMP + diphosphate + H(+). This Halalkalibacterium halodurans (strain ATCC BAA-125 / DSM 18197 / FERM 7344 / JCM 9153 / C-125) (Bacillus halodurans) protein is Histidine--tRNA ligase.